Reading from the N-terminus, the 88-residue chain is Large ribosomal subunit protein bL27 (88 aa).

The tract at residues 1–20 is disordered; it reads MASKKGVGSTKDGRDSIAKR.

This sequence belongs to the bacterial ribosomal protein bL27 family.

The protein is Large ribosomal subunit protein bL27 (rpmA) of Geobacillus stearothermophilus (Bacillus stearothermophilus).